The following is a 473-amino-acid chain: Siroheme synthase (473 aa).

The tract at residues 1–203 (MTLFPIFADL…QQPGLAEQEL (203 aa)) is precorrin-2 dehydrogenase /sirohydrochlorin ferrochelatase. NAD(+)-binding positions include 22–23 (AV) and 43–44 (PR). Position 128 is a phosphoserine (Ser128). Positions 216–473 (GSVVLVGAGP…GLPGPQALAA (258 aa)) are uroporphyrinogen-III C-methyltransferase. Position 225 (Pro225) interacts with S-adenosyl-L-methionine. Asp248 (proton acceptor) is an active-site residue. The active-site Proton donor is Lys270. Residues 302-304 (GGD), Ile307, 332-333 (TA), Met384, and Gly413 contribute to the S-adenosyl-L-methionine site.

In the N-terminal section; belongs to the precorrin-2 dehydrogenase / sirohydrochlorin ferrochelatase family. The protein in the C-terminal section; belongs to the precorrin methyltransferase family.

The enzyme catalyses uroporphyrinogen III + 2 S-adenosyl-L-methionine = precorrin-2 + 2 S-adenosyl-L-homocysteine + H(+). It carries out the reaction precorrin-2 + NAD(+) = sirohydrochlorin + NADH + 2 H(+). It catalyses the reaction siroheme + 2 H(+) = sirohydrochlorin + Fe(2+). The protein operates within cofactor biosynthesis; adenosylcobalamin biosynthesis; precorrin-2 from uroporphyrinogen III: step 1/1. It functions in the pathway cofactor biosynthesis; adenosylcobalamin biosynthesis; sirohydrochlorin from precorrin-2: step 1/1. Its pathway is porphyrin-containing compound metabolism; siroheme biosynthesis; precorrin-2 from uroporphyrinogen III: step 1/1. It participates in porphyrin-containing compound metabolism; siroheme biosynthesis; siroheme from sirohydrochlorin: step 1/1. The protein operates within porphyrin-containing compound metabolism; siroheme biosynthesis; sirohydrochlorin from precorrin-2: step 1/1. In terms of biological role, multifunctional enzyme that catalyzes the SAM-dependent methylations of uroporphyrinogen III at position C-2 and C-7 to form precorrin-2 via precorrin-1. Then it catalyzes the NAD-dependent ring dehydrogenation of precorrin-2 to yield sirohydrochlorin. Finally, it catalyzes the ferrochelation of sirohydrochlorin to yield siroheme. In Bordetella pertussis (strain Tohama I / ATCC BAA-589 / NCTC 13251), this protein is Siroheme synthase.